A 252-amino-acid polypeptide reads, in one-letter code: Urease accessory protein UreD (252 aa).

It belongs to the UreD family. In terms of assembly, ureD, UreF and UreG form a complex that acts as a GTP-hydrolysis-dependent molecular chaperone, activating the urease apoprotein by helping to assemble the nickel containing metallocenter of UreC. The UreE protein probably delivers the nickel.

It localises to the cytoplasm. Functionally, required for maturation of urease via the functional incorporation of the urease nickel metallocenter. This is Urease accessory protein UreD from Streptomyces avermitilis (strain ATCC 31267 / DSM 46492 / JCM 5070 / NBRC 14893 / NCIMB 12804 / NRRL 8165 / MA-4680).